The following is a 517-amino-acid chain: ATP synthase subunit alpha 1 (517 aa).

ATP is bound at residue 174–181 (GDRQTGKT).

Belongs to the ATPase alpha/beta chains family. In terms of assembly, F-type ATPases have 2 components, CF(1) - the catalytic core - and CF(0) - the membrane proton channel. CF(1) has five subunits: alpha(3), beta(3), gamma(1), delta(1), epsilon(1). CF(0) has three main subunits: a(1), b(2) and c(9-12). The alpha and beta chains form an alternating ring which encloses part of the gamma chain. CF(1) is attached to CF(0) by a central stalk formed by the gamma and epsilon chains, while a peripheral stalk is formed by the delta and b chains.

It is found in the cell inner membrane. It catalyses the reaction ATP + H2O + 4 H(+)(in) = ADP + phosphate + 5 H(+)(out). Its function is as follows. Produces ATP from ADP in the presence of a proton gradient across the membrane. The alpha chain is a regulatory subunit. The polypeptide is ATP synthase subunit alpha 1 (Polaromonas naphthalenivorans (strain CJ2)).